We begin with the raw amino-acid sequence, 343 residues long: Aspartate carbamoyltransferase catalytic subunit (343 aa).

The span at 1 to 14 (MTTDTTGRTGNPAA) shows a compositional bias: polar residues. Residues 1-20 (MTTDTTGRTGNPAATASPDR) form a disordered region. Carbamoyl phosphate-binding residues include R91 and T92. K119 is a binding site for L-aspartate. The carbamoyl phosphate site is built by R141, H171, and Q174. L-aspartate contacts are provided by R204 and R259. Carbamoyl phosphate-binding residues include G300 and P301.

It belongs to the aspartate/ornithine carbamoyltransferase superfamily. ATCase family. In terms of assembly, heterododecamer (2C3:3R2) of six catalytic PyrB chains organized as two trimers (C3), and six regulatory PyrI chains organized as three dimers (R2).

The catalysed reaction is carbamoyl phosphate + L-aspartate = N-carbamoyl-L-aspartate + phosphate + H(+). It functions in the pathway pyrimidine metabolism; UMP biosynthesis via de novo pathway; (S)-dihydroorotate from bicarbonate: step 2/3. Its function is as follows. Catalyzes the condensation of carbamoyl phosphate and aspartate to form carbamoyl aspartate and inorganic phosphate, the committed step in the de novo pyrimidine nucleotide biosynthesis pathway. This is Aspartate carbamoyltransferase catalytic subunit from Burkholderia lata (strain ATCC 17760 / DSM 23089 / LMG 22485 / NCIMB 9086 / R18194 / 383).